A 319-amino-acid chain; its full sequence is Ribosomal large subunit pseudouridine synthase C (319 aa).

One can recognise an S4 RNA-binding domain in the interval 20–83 (QRIDNFLRTQ…AEREEEAVSP (64 aa)). The active site involves Asp-144.

It belongs to the pseudouridine synthase RluA family.

The enzyme catalyses uridine(955/2504/2580) in 23S rRNA = pseudouridine(955/2504/2580) in 23S rRNA. Functionally, responsible for synthesis of pseudouridine from uracil at positions 955, 2504 and 2580 in 23S ribosomal RNA. This chain is Ribosomal large subunit pseudouridine synthase C (rluC), found in Salmonella typhi.